A 745-amino-acid chain; its full sequence is 1,4-alpha-glucan branching enzyme GlgB (745 aa).

Aspartate 416 acts as the Nucleophile in catalysis. Glutamate 469 serves as the catalytic Proton donor.

Belongs to the glycosyl hydrolase 13 family. GlgB subfamily. Monomer.

The catalysed reaction is Transfers a segment of a (1-&gt;4)-alpha-D-glucan chain to a primary hydroxy group in a similar glucan chain.. The protein operates within glycan biosynthesis; glycogen biosynthesis. Catalyzes the formation of the alpha-1,6-glucosidic linkages in glycogen by scission of a 1,4-alpha-linked oligosaccharide from growing alpha-1,4-glucan chains and the subsequent attachment of the oligosaccharide to the alpha-1,6 position. The protein is 1,4-alpha-glucan branching enzyme GlgB of Shewanella sp. (strain MR-7).